Consider the following 196-residue polypeptide: Protein GrpE (196 aa).

The interval M1–D41 is disordered.

It belongs to the GrpE family. In terms of assembly, homodimer.

It is found in the cytoplasm. In terms of biological role, participates actively in the response to hyperosmotic and heat shock by preventing the aggregation of stress-denatured proteins, in association with DnaK and GrpE. It is the nucleotide exchange factor for DnaK and may function as a thermosensor. Unfolded proteins bind initially to DnaJ; upon interaction with the DnaJ-bound protein, DnaK hydrolyzes its bound ATP, resulting in the formation of a stable complex. GrpE releases ADP from DnaK; ATP binding to DnaK triggers the release of the substrate protein, thus completing the reaction cycle. Several rounds of ATP-dependent interactions between DnaJ, DnaK and GrpE are required for fully efficient folding. This Klebsiella pneumoniae subsp. pneumoniae (strain ATCC 700721 / MGH 78578) protein is Protein GrpE.